Reading from the N-terminus, the 362-residue chain is Phosphoserine aminotransferase (362 aa).

L-glutamate is bound at residue R43. Pyridoxal 5'-phosphate-binding positions include 77–78 (AR), W103, T153, D173, and Q196. At K197 the chain carries N6-(pyridoxal phosphate)lysine.

Belongs to the class-V pyridoxal-phosphate-dependent aminotransferase family. SerC subfamily. In terms of assembly, homodimer. Pyridoxal 5'-phosphate is required as a cofactor.

Its subcellular location is the cytoplasm. The enzyme catalyses O-phospho-L-serine + 2-oxoglutarate = 3-phosphooxypyruvate + L-glutamate. It catalyses the reaction 4-(phosphooxy)-L-threonine + 2-oxoglutarate = (R)-3-hydroxy-2-oxo-4-phosphooxybutanoate + L-glutamate. The protein operates within amino-acid biosynthesis; L-serine biosynthesis; L-serine from 3-phospho-D-glycerate: step 2/3. It participates in cofactor biosynthesis; pyridoxine 5'-phosphate biosynthesis; pyridoxine 5'-phosphate from D-erythrose 4-phosphate: step 3/5. In terms of biological role, catalyzes the reversible conversion of 3-phosphohydroxypyruvate to phosphoserine and of 3-hydroxy-2-oxo-4-phosphonooxybutanoate to phosphohydroxythreonine. The polypeptide is Phosphoserine aminotransferase (Legionella pneumophila (strain Corby)).